The sequence spans 852 residues: Leucine--tRNA ligase (852 aa).

The 'HIGH' region motif lies at P51 to H61. The 'KMSKS' region signature appears at K615–S619. K618 lines the ATP pocket.

This sequence belongs to the class-I aminoacyl-tRNA synthetase family.

It is found in the cytoplasm. The catalysed reaction is tRNA(Leu) + L-leucine + ATP = L-leucyl-tRNA(Leu) + AMP + diphosphate. This chain is Leucine--tRNA ligase, found in Clavibacter sepedonicus (Clavibacter michiganensis subsp. sepedonicus).